The sequence spans 652 residues: tRNA 5-methylaminomethyl-2-thiouridine biosynthesis bifunctional protein MnmC (652 aa).

The tract at residues 1–235 is tRNA (mnm(5)s(2)U34)-methyltransferase; it reads MPDRLVPATL…EPALRVGEYA (235 aa). An FAD-dependent cmnm(5)s(2)U34 oxidoreductase region spans residues 259–652; that stretch reads IGAGLAGCAV…IRALRGRQIG (394 aa).

The protein in the N-terminal section; belongs to the methyltransferase superfamily. tRNA (mnm(5)s(2)U34)-methyltransferase family. This sequence in the C-terminal section; belongs to the DAO family. Requires FAD as cofactor.

It localises to the cytoplasm. The catalysed reaction is 5-aminomethyl-2-thiouridine(34) in tRNA + S-adenosyl-L-methionine = 5-methylaminomethyl-2-thiouridine(34) in tRNA + S-adenosyl-L-homocysteine + H(+). In terms of biological role, catalyzes the last two steps in the biosynthesis of 5-methylaminomethyl-2-thiouridine (mnm(5)s(2)U) at the wobble position (U34) in tRNA. Catalyzes the FAD-dependent demodification of cmnm(5)s(2)U34 to nm(5)s(2)U34, followed by the transfer of a methyl group from S-adenosyl-L-methionine to nm(5)s(2)U34, to form mnm(5)s(2)U34. The sequence is that of tRNA 5-methylaminomethyl-2-thiouridine biosynthesis bifunctional protein MnmC from Burkholderia ambifaria (strain ATCC BAA-244 / DSM 16087 / CCUG 44356 / LMG 19182 / AMMD) (Burkholderia cepacia (strain AMMD)).